The chain runs to 173 residues: Alpha-crystallin A chain (173 aa).

M1 is modified (N-acetylmethionine). Positions M1–E63 are required for complex formation with BFSP1 and BFSP2. Q6 carries the deamidated glutamine; partial modification. Residue S45 is modified to Phosphoserine. The residue at position 50 (Q50) is a Deamidated glutamine; partial. One can recognise a sHSP domain in the interval L52–S162. K70 carries the post-translational modification N6-acetyllysine. Residue Q90 is modified to Deamidated glutamine; partial. K99 bears the N6-acetyllysine mark. Position 100 (H100) interacts with Zn(2+). Position 101 is a deamidated asparagine; partial (N101). Zn(2+) contacts are provided by E102 and H107. S122 bears the Phosphoserine mark. At N123 the chain carries Deamidated asparagine; partial. Positions P144–S173 are disordered. The span at G153–P167 shows a compositional bias: basic and acidic residues. Residue H154 participates in Zn(2+) binding. A glycan (O-linked (GlcNAc) serine) is linked at S162.

Belongs to the small heat shock protein (HSP20) family. Heteromer composed of three CRYAA and one CRYAB subunits. Inter-subunit bridging via zinc ions enhances stability, which is crucial as there is no protein turn over in the lens. Can also form homodimers and homotetramers (dimers of dimers) which serve as the building blocks of homooligomers. Within homooligomers, the zinc-binding motif is created from residues of 3 different molecules. His-100 and Glu-102 from one molecule are ligands of the zinc ion, and His-107 and His-154 residues from additional molecules complete the site with tetrahedral coordination geometry. Part of a complex required for lens intermediate filament formation composed of BFSP1, BFSP2 and CRYAA. In terms of processing, acetylation at Lys-70 may increase chaperone activity. Post-translationally, undergoes age-dependent proteolytical cleavage at the C-terminus.

The protein localises to the cytoplasm. It is found in the nucleus. Functionally, contributes to the transparency and refractive index of the lens. Acts as a chaperone, preventing aggregation of various proteins under a wide range of stress conditions. Required for the correct formation of lens intermediate filaments as part of a complex composed of BFSP1, BFSP2 and CRYAA. This chain is Alpha-crystallin A chain (CRYAA), found in Giraffa camelopardalis (Giraffe).